Reading from the N-terminus, the 357-residue chain is GDSL esterase/lipase At5g45950 (357 aa).

A signal peptide spans 1–23 (MLLVAFVTLLVAVALQPLPSVLS). N37 is a glycosylation site (N-linked (GlcNAc...) asparagine). The active-site Nucleophile is the S47. N132 is a glycosylation site (N-linked (GlcNAc...) asparagine). Residues D331 and H334 contribute to the active site.

Belongs to the 'GDSL' lipolytic enzyme family.

It is found in the secreted. This Arabidopsis thaliana (Mouse-ear cress) protein is GDSL esterase/lipase At5g45950.